The sequence spans 340 residues: DNA primase large subunit PriL (340 aa).

4 residues coordinate [4Fe-4S] cluster: Cys-229, Cys-301, Cys-310, and Cys-318.

The protein belongs to the eukaryotic-type primase large subunit family. As to quaternary structure, heterodimer of a small subunit (PriS) and a large subunit (PriL). It depends on [4Fe-4S] cluster as a cofactor.

Functionally, regulatory subunit of DNA primase, an RNA polymerase that catalyzes the synthesis of short RNA molecules used as primers for DNA polymerase during DNA replication. Stabilizes and modulates the activity of the small subunit, increasing the rate of DNA synthesis, and conferring RNA synthesis capability. The DNA polymerase activity may enable DNA primase to also catalyze primer extension after primer synthesis. May also play a role in DNA repair. The polypeptide is DNA primase large subunit PriL (Thermoplasma acidophilum (strain ATCC 25905 / DSM 1728 / JCM 9062 / NBRC 15155 / AMRC-C165)).